The sequence spans 197 residues: MIIGLTGGIGSGKSAAADFFIDLGISVLDADQVAKEALSTNSPGYTDFISQFGEVYLNNNREVDRLKLRELIFSNPSKKKDLENIIHPIVRSAISNFIITSTSPYSIVMVPLIFETNSYKNYDKIITVDCDLELQIVRASSRDAQNKSQIKNIINKQASREERLSISDDVLINNSTLSDLKKQVNVLHTKYMELLNE.

One can recognise a DPCK domain in the interval 2–197; it reads IIGLTGGIGS…HTKYMELLNE (196 aa). 10–15 serves as a coordination point for ATP; it reads GSGKSA.

The protein belongs to the CoaE family.

It localises to the cytoplasm. The catalysed reaction is 3'-dephospho-CoA + ATP = ADP + CoA + H(+). The protein operates within cofactor biosynthesis; coenzyme A biosynthesis; CoA from (R)-pantothenate: step 5/5. Catalyzes the phosphorylation of the 3'-hydroxyl group of dephosphocoenzyme A to form coenzyme A. This chain is Dephospho-CoA kinase, found in Gamma-proteobacterium EBAC31A08.